We begin with the raw amino-acid sequence, 1064 residues long: Valine--tRNA ligase, mitochondrial (1064 aa).

A mitochondrion-targeting transit peptide spans 1 to 26; the sequence is MPHLPLASFRPPFWGLRHSRGLPRFH. Residues 25–65 form a disordered region; the sequence is FHSVSTQSEPHGSPISRRNREAKQKRLREKQATLETDIAGE. Residues 42–56 show a composition bias toward basic and acidic residues; it reads RNREAKQKRLREKQA. Positions 146 to 156 match the 'HIGH' region motif; that stretch reads PNVTGSLHIGH. Residues 659-663 carry the 'KMSKS' region motif; the sequence is KMSKS. Position 662 (Lys662) interacts with ATP.

It belongs to the class-I aminoacyl-tRNA synthetase family.

The protein localises to the mitochondrion. The enzyme catalyses tRNA(Val) + L-valine + ATP = L-valyl-tRNA(Val) + AMP + diphosphate. In terms of biological role, catalyzes the attachment of valine to tRNA(Val) in a two-step reaction: valine is first activated by ATP to form Val-AMP and then transferred to the acceptor end of tRNA(Val). This is Valine--tRNA ligase, mitochondrial (VARS2) from Macaca mulatta (Rhesus macaque).